Here is a 397-residue protein sequence, read N- to C-terminus: Argininosuccinate synthase (397 aa).

Position 9 to 17 (9 to 17) interacts with ATP; that stretch reads AYSGGLDTS. Residue Tyr-87 coordinates L-citrulline. Gly-117 lines the ATP pocket. Thr-119, Asn-123, and Asp-124 together coordinate L-aspartate. Residue Asn-123 participates in L-citrulline binding. L-citrulline-binding residues include Arg-127, Ser-175, Ser-184, Glu-257, and Tyr-269.

The protein belongs to the argininosuccinate synthase family. Type 1 subfamily. In terms of assembly, homotetramer.

It is found in the cytoplasm. The catalysed reaction is L-citrulline + L-aspartate + ATP = 2-(N(omega)-L-arginino)succinate + AMP + diphosphate + H(+). It participates in amino-acid biosynthesis; L-arginine biosynthesis; L-arginine from L-ornithine and carbamoyl phosphate: step 2/3. The sequence is that of Argininosuccinate synthase from Dictyoglomus turgidum (strain DSM 6724 / Z-1310).